We begin with the raw amino-acid sequence, 89 residues long: Small ribosomal subunit protein bS20 (89 aa).

Belongs to the bacterial ribosomal protein bS20 family.

In terms of biological role, binds directly to 16S ribosomal RNA. In Helicobacter acinonychis (strain Sheeba), this protein is Small ribosomal subunit protein bS20.